Reading from the N-terminus, the 452-residue chain is Tubulin beta-2 chain (452 aa).

8 residues coordinate GTP: Gln11, Glu74, Ser143, Val147, Thr148, Gly149, Asn209, and Asn231. Glu74 contributes to the Mg(2+) binding site. Residues 431-452 (QEATADDEAEFEEEGEVEGEYD) form a disordered region. Acidic residues predominate over residues 434-452 (TADDEAEFEEEGEVEGEYD).

The protein belongs to the tubulin family. In terms of assembly, dimer of alpha and beta chains. A typical microtubule is a hollow water-filled tube with an outer diameter of 25 nm and an inner diameter of 15 nM. Alpha-beta heterodimers associate head-to-tail to form protofilaments running lengthwise along the microtubule wall with the beta-tubulin subunit facing the microtubule plus end conferring a structural polarity. Microtubules usually have 13 protofilaments but different protofilament numbers can be found in some organisms and specialized cells. The cofactor is Mg(2+).

It localises to the cytoplasm. The protein localises to the cytoskeleton. Functionally, tubulin is the major constituent of microtubules, a cylinder consisting of laterally associated linear protofilaments composed of alpha- and beta-tubulin heterodimers. Microtubules grow by the addition of GTP-tubulin dimers to the microtubule end, where a stabilizing cap forms. Below the cap, tubulin dimers are in GDP-bound state, owing to GTPase activity of alpha-tubulin. The polypeptide is Tubulin beta-2 chain (Homarus americanus (American lobster)).